The chain runs to 514 residues: HERV-H LTR-associating protein 1 homolog (514 aa).

A signal peptide spans 1–29 (MQSFLLHCPPIRLCMGLACILFLWNAVSG). 9 N-linked (GlcNAc...) asparagine glycosylation sites follow: Asn58, Asn97, Asn139, Asn161, Asn179, Asn200, Asn217, Asn232, and Asn321. The interval 379 to 420 (LHPTGILTTPSRLAQPSRASGTLMPGTQTTNPTQAPAPRVPQ) is disordered. A compositionally biased stretch (polar residues) spans 384 to 398 (ILTTPSRLAQPSRAS). Residues 403–415 (PGTQTTNPTQAPA) show a composition bias toward low complexity.

It is found in the secreted. This is HERV-H LTR-associating protein 1 homolog (Hhla1) from Mus musculus (Mouse).